A 62-amino-acid chain; its full sequence is Alpha-conotoxin-like S1.1 (62 aa).

The first 21 residues, 1-21 (MGMRMMFTVFLLVVLAITVVS), serve as a signal peptide directing secretion. A propeptide spanning residues 22–48 (FPLDRESDGANAEARTHDHEKHALDRN) is cleaved from the precursor. Cystine bridges form between cysteine 50–cysteine 56 and cysteine 51–cysteine 61. The residue at position 61 (cysteine 61) is a Cysteine amide.

Belongs to the conotoxin A superfamily. As to expression, expressed by the venom duct.

Its subcellular location is the secreted. Functionally, alpha-conotoxins act on postsynaptic membranes, they bind to the nicotinic acetylcholine receptors (nAChR) and thus inhibit them. The polypeptide is Alpha-conotoxin-like S1.1 (Conus striatus (Striated cone)).